Consider the following 798-residue polypeptide: Integrin beta-1 (798 aa).

The signal sequence occupies residues 1-20 (MNLQPIFWIGLISSICCVFA). The 51-residue stretch at 26-76 (RCLKANAKSCGECIQAGPNCGWCTNSTFLQEGMPTSARCDDLEALKKKGCP) folds into the PSI domain. Disulfide bonds link Cys27–Cys45, Cys35–Cys464, Cys38–Cys64, Cys48–Cys75, Cys207–Cys213, Cys261–Cys301, Cys401–Cys415, Cys435–Cys462, Cys466–Cys486, Cys477–Cys489, Cys491–Cys500, Cys502–Cys533, Cys516–Cys531, Cys525–Cys536, Cys538–Cys553, Cys555–Cys576, Cys560–Cys574, Cys568–Cys579, Cys581–Cys590, Cys592–Cys615, Cys599–Cys613, Cys607–Cys618, Cys620–Cys630, Cys633–Cys636, Cys640–Cys691, Cys646–Cys665, Cys649–Cys661, and Cys699–Cys723. Asn50 is a glycosylation site (N-linked (GlcNAc...) asparagine). Positions 75 to 107 (CPPDDIENPRGSKDIKKNKNVTNRSKGTAEKLK) are disordered. The segment covering 81–91 (ENPRGSKDIKK) has biased composition (basic and acidic residues). N-linked (GlcNAc...) asparagine glycosylation is found at Asn94 and Asn97. The VWFA domain maps to 140-378 (DYPIDLYYLM…QLIIDAYNSL (239 aa)). Residues Ser152 and Ser154 each contribute to the Mg(2+) site. The Ca(2+) site is built by Ser154, Asp157, Asp158, and Glu189. A CX3CL1-binding region spans residues 207 to 213 (CTSEQNC). N-linked (GlcNAc...) asparagine glycosylation is present at Asn212. 4 residues coordinate Ca(2+): Asn244, Asp246, Pro248, and Glu249. Mg(2+) is bound at residue Glu249. N-linked (GlcNAc...) asparagine glycosylation is present at Asn269. The tract at residues 295–314 (LPNDGQCHLENNMYTMSHYY) is CX3CL1-binding. Ala362 contributes to the Ca(2+) binding site. N-linked (GlcNAc...) asparagine glycans are attached at residues Asn363, Asn406, and Asn417. The tract at residues 383 to 465 (ILENSKLSEG…VILQYICECE (83 aa)) is interaction with TMEM182. I-EGF domains lie at 466-501 (CQSE…RHCE), 502-554 (CSTD…KFCE), 555-591 (CDNF…SACD), and 592-631 (CSLD…QTCE). The N-linked (GlcNAc...) asparagine glycan is linked to Asn481. A glycan (N-linked (GlcNAc...) asparagine) is linked at Asn520. The N-linked (GlcNAc...) asparagine glycan is linked to Asn584. Asn669 carries N-linked (GlcNAc...) asparagine glycosylation. A helical membrane pass occupies residues 729–749 (IIPIVAGVVAGIVLIGLALLL). The tract at residues 762–767 (EFAKFE) is signal for sorting from recycling endosomes; interaction with ACAP1. Thr777 is subject to Phosphothreonine. At Tyr783 the chain carries Phosphotyrosine. Ser785 bears the Phosphoserine mark. The interaction with ITGB1BP1 stretch occupies residues 785-792 (SAVTTVVN). A Phosphothreonine modification is found at Thr789. At Lys794 the chain carries N6-acetyllysine; alternate. Lys794 is covalently cross-linked (Glycyl lysine isopeptide (Lys-Gly) (interchain with G-Cter in SUMO1); alternate).

It belongs to the integrin beta chain family. As to quaternary structure, interacts with seprase FAP (seprase); the interaction occurs at the cell surface of invadopodia membrane in a collagen-dependent manner. Heterodimer of an alpha and a beta subunit. Beta-1 associates with either alpha-1, alpha-2, alpha-3, alpha-4, alpha-5, alpha-6, alpha-7, alpha-8, alpha-9, alpha-10, alpha-11 or alpha-V. ITGA6:ITGB1 is found in a complex with CD9; interaction takes place in oocytes and is involved in sperm-egg fusion. Binds LGALS3BP and NMRK2, when associated with alpha-7, but not with alpha-5. Interacts with FLNA, FLNB, FLNC and RANBP9. Interacts with KRT1 in the presence of RACK1 and SRC. Interacts with JAML; integrin alpha-4/beta-1 may regulate leukocyte to endothelial cells adhesion by controlling JAML homodimerization. Interacts with RAB21. Interacts (via the cytoplasmic region) with RAB25 (via the hypervariable C-terminal region). Interacts with MYO10. Interacts with ITGB1BP1 (via C-terminal region); the interaction is a prerequisite for focal adhesion disassembly. Interacts with TLN1; the interaction is prevented by competitive binding of ITGB1BP1. Interacts with ACAP1; required for ITGB1 recycling. Interacts with ASAP3. Interacts with FERMT2; the interaction is inhibited in presence of ITGB1BP1. Interacts with DAB2. Interacts with FGR and HCK. Interacts with alpha-7A and alpha-7B in adult skeletal muscle. Interacts with alpha-7B in cardiomyocytes of adult heart. Interacts with EMP2; the interaction may be direct or indirect and ITGB1 has a heterodimer form. ITGA5:ITGB1 interacts with CCN3. ITGA4:ITGB1 is found in a ternary complex with CX3CR1 and CX3CL1. ITGA5:ITGB1 interacts with FBN1. ITGA5:ITGB1 acts as a receptor for fibronectin FN1 and mediates R-G-D-dependent cell adhesion to FN1. ITGA5:ITGB1 interacts with IL1B. Interacts with MDK. ITGA4:ITGB1 interacts with MDK; this interaction mediates MDK-induced osteoblast cells migration through PXN phosphorylation. ITGA6:ITGB1 interacts with MDK; this interaction mediates MDK-induced neurite-outgrowth. ITGA5:ITGB1 interacts with ACE2. Interacts with TMEM182 and LAMB1. Interacts with tensin TNS3; TNS3 also interacts with PEAK1, thus acting as an adapter molecule to bridge the association of PEAK1 with ITGB1. Interacts with tensin TNS4; the interaction displaces tensin TNS3 from the ITGB1 cytoplasmic tail and promotes ITGB1 stability. Integrin ITGA9:ITGB1 interacts with SPP1/OPN (via N-terminus). Integrin ITGA9:ITGB1 interacts with TNC/TNFN3 (via the 3rd Fibronectin type-III domain). Integrins ITGA4:ITGB1 and ITGA9:ITGB1 interact with SVEP1 (via Sushi domain 21); thereby inhibit Ca(2+) intracellular signaling and as a result repress vasocontraction. ITGA4:ITGB1 and ITGA5:ITGB1 interacts with SELP. Interacts with CD248. ITGA5:ITGB1 interacts with IGFBP1. ITGA4:ITGB1 interacts with BCAM. Interacts with ADGRG6.

It is found in the cell membrane. It localises to the cell projection. The protein resides in the invadopodium membrane. The protein localises to the ruffle membrane. Its subcellular location is the recycling endosome. It is found in the melanosome. It localises to the lamellipodium. The protein resides in the ruffle. The protein localises to the cell junction. Its subcellular location is the focal adhesion. Its function is as follows. Integrins alpha-1/beta-1, alpha-2/beta-1, alpha-10/beta-1 and alpha-11/beta-1 are receptors for collagen. Integrins alpha-1/beta-1 and alpha-2/beta-2 recognize the proline-hydroxylated sequence G-F-P-G-E-R in collagen. Integrins alpha-2/beta-1, alpha-3/beta-1, alpha-4/beta-1, alpha-5/beta-1, alpha-8/beta-1, alpha-10/beta-1, alpha-11/beta-1 and alpha-V/beta-1 are receptors for fibronectin. Alpha-4/beta-1 recognizes one or more domains within the alternatively spliced CS-1 and CS-5 regions of fibronectin. Integrin alpha-5/beta-1 is a receptor for fibrinogen. Integrin alpha-1/beta-1, alpha-2/beta-1, alpha-6/beta-1 and alpha-7/beta-1 are receptors for lamimin. Integrin alpha-6/beta-1 (ITGA6:ITGB1) is present in oocytes and is involved in sperm-egg fusion. Integrin alpha-4/beta-1 is a receptor for VCAM1 and recognizes the sequence Q-I-D-S in VCAM1. Integrin alpha-9/beta-1 is a receptor for VCAM1, cytotactin and osteopontin. It recognizes the sequence A-E-I-D-G-I-E-L in cytotactin. Integrin alpha-3/beta-1 is a receptor for epiligrin, thrombospondin and CSPG4. Integrin alpha-3/beta-1 provides a docking site for FAP (seprase) at invadopodia plasma membranes in a collagen-dependent manner and hence may participate in the adhesion, formation of invadopodia and matrix degradation processes, promoting cell invasion. Alpha-3/beta-1 may mediate with LGALS3 the stimulation by CSPG4 of endothelial cells migration. Integrin alpha-V/beta-1 is a receptor for vitronectin. Beta-1 integrins recognize the sequence R-G-D in a wide array of ligands. When associated with alpha-7/beta-1 integrin, regulates cell adhesion and laminin matrix deposition. Involved in promoting endothelial cell motility and angiogenesis. Involved in osteoblast compaction through the fibronectin fibrillogenesis cell-mediated matrix assembly process and the formation of mineralized bone nodules. May be involved in up-regulation of the activity of kinases such as PKC via binding to KRT1. Together with KRT1 and RACK1, serves as a platform for SRC activation or inactivation. Plays a mechanistic adhesive role during telophase, required for the successful completion of cytokinesis. ITGA4:ITGB1 binds to fractalkine (CX3CL1) and may act as its coreceptor in CX3CR1-dependent fractalkine signaling. ITGA4:ITGB1 and ITGA5:ITGB1 bind to PLA2G2A via a site (site 2) which is distinct from the classical ligand-binding site (site 1) and this induces integrin conformational changes and enhanced ligand binding to site 1. ITGA5:ITGB1 acts as a receptor for fibrillin-1 (FBN1) and mediates R-G-D-dependent cell adhesion to FBN1. ITGA5:ITGB1 is a receptor for IL1B and binding is essential for IL1B signaling. ITGA5:ITGB3 is a receptor for soluble CD40LG and is required for CD40/CD40LG signaling. Plays an important role in myoblast differentiation and fusion during skeletal myogenesis. ITGA9:ITGB1 may play a crucial role in SVEP1/polydom-mediated myoblast cell adhesion. Integrins ITGA9:ITGB1 and ITGA4:ITGB1 repress PRKCA-mediated L-type voltage-gated channel Ca(2+) influx and ROCK-mediated calcium sensitivity in vascular smooth muscle cells via their interaction with SVEP1, thereby inhibit vasocontraction. The chain is Integrin beta-1 (ITGB1) from Pongo abelii (Sumatran orangutan).